Consider the following 249-residue polypeptide: MKQYQTEAIVLRASAVREADRTLVLLTRDRGKLRVWAHGAARPTSRKRGAVQPFCRSRFLLERGREIDVVRQAEALEEFPALHADLEALALAGYVCELAEGFAAEGQAEPGIYGLLLQVLRRLAEDKSGLPVRFFEARILALTGFGPELGSCAGCGAQPVVPARFSPALGGVLCRGCRDRDPPARPCRSAVVQVLGKLLEWPLDRLKVLRIDAATGREVADILQACVCHHLEREPRSLAFLRKMGISSS.

Belongs to the RecO family.

Functionally, involved in DNA repair and RecF pathway recombination. The chain is DNA repair protein RecO from Desulforudis audaxviator (strain MP104C).